A 107-amino-acid chain; its full sequence is Sperm-specific class P protein 31 (107 aa).

Positions 1 to 107 (MINIDPPSGD…GEVVVKMVAS (107 aa)) constitute an MSP domain.

Expressed at higher level in testis.

This chain is Sperm-specific class P protein 31 (ssp-31), found in Caenorhabditis elegans.